The primary structure comprises 99 residues: Protein S100-Z (99 aa).

EF-hand domains follow at residues 13–48 and 50–85; these read IRIFHRYSGKERKRFKLSKGELKLLLQRELTEFLSC and KETQLVDKIVQDLDANKDNEVDFNEFVVMVAALTVA. Positions 20, 23, 28, 33, 63, 65, 67, 69, and 74 each coordinate Ca(2+).

Belongs to the S-100 family. As to quaternary structure, homodimer. Interacts with S100P. As to expression, highest level of expression in spleen and leukocytes.

This is Protein S100-Z from Homo sapiens (Human).